Here is a 695-residue protein sequence, read N- to C-terminus: MAKKKGDEKANPAPQSDNEEQNFEEEPDFDDPEDFVEIPEEELLADILEQKPKESDGYENVVVVDGCPQVGPERLEKLQSVINKIFSKFGKIVNEYYPTTENGLTTGYIFLEYSNPQNAAEAVKATNNCKLDKQHTFLVNLFTDFQKYSDIPKEWEPPAPQPFKVQSDLQWYLMDPDAYDQFLVGIGTGVALQVWQNALPEPLLLQERPNWTETYAVWSPLGTYLATFHWRGVALWAGPKFSQFQKFFHPEARFISFSPCENYMVTFSPSGDRGDDKKWIIGDIRTGQEKRSFPPPDEYVTWPIFRWSKDDRFFARIGADVLSVYETPGFGLLDKKSIKIPGIRDFSWSPSDNTLAYWVAEDKDVPARVTLLEIPNRTEVRSKNLFSVADCKIHWQKSGDYLCVKVDRYSKVKKDKIDIKYSGMYYNFEIFHMREKEIPVDSVEIKEPIQAFAWEPVGSKFSIIHGDPANISISFYQVNTGQAPTLLKKFERKPFNHLFWSPSGQFIVLANLGLTGGALEFLDTNDFTIMNVADHYQMSGIEWDPTGRYVVTGVSSLKCKMDCGYYIWSFQGKILRRVMKEGFAQFHWRPRPPTLLSEKQQKEIKKNLKKYYSQFESKDRMRSSKASKELVAKRTEQMKKFTEYRESKIQEWNEQKPRRLELRDYVDTDGLDTDAVNTVEEVIEFFVKEEQTVIE.

The segment covering 1–10 (MAKKKGDEKA) has biased composition (basic and acidic residues). Residues 1–43 (MAKKKGDEKANPAPQSDNEEQNFEEEPDFDDPEDFVEIPEEEL) are disordered. Residues 17–43 (DNEEQNFEEEPDFDDPEDFVEIPEEEL) show a composition bias toward acidic residues. In terms of domain architecture, RRM spans 60–144 (NVVVVDGCPQ…HTFLVNLFTD (85 aa)). WD repeat units lie at residues 164–205 (KVQS…PLLL), 295–335 (PPDE…LLDK), 338–373 (IKIPGIRDFSWSPSDNTLAYWVAEDKDVPARVTLLE), and 444–486 (EIKE…APTL).

The protein belongs to the eIF-3 subunit B family. Component of the eukaryotic translation initiation factor 3 (eIF-3) complex.

It localises to the cytoplasm. Functionally, RNA-binding component of the eukaryotic translation initiation factor 3 (eIF-3) complex, which is involved in protein synthesis of a specialized repertoire of mRNAs and, together with other initiation factors, stimulates binding of mRNA and methionyl-tRNAi to the 40S ribosome. The eIF-3 complex specifically targets and initiates translation of a subset of mRNAs involved in cell proliferation. The chain is Eukaryotic translation initiation factor 3 subunit B from Bombyx mori (Silk moth).